The sequence spans 218 residues: MSDNDELQQIAHLRREYTRGGLRRHDLPAEPLPLFERWLRQACDAKLADPTAMVVATVDERGQPYQRIVLLKHYDEKGLVFYTNLGSRKAHQIENNPQVSLLFPWHMLERQVMVIGKAERLSTLEVVKYFHSRPRDSQIGAWVSKQSSRISARGILESKFLELKQKFQQGEVPLPSFWGGFRVSIEQMEFWQGGEHRLHDRFLYQRDSGAWKIDRLAP.

Substrate contacts are provided by residues 14 to 17 (RREY) and lysine 72. FMN-binding positions include 67–72 (RIVLLK), 82–83 (YT), arginine 88, lysine 89, and glutamine 111. The substrate site is built by tyrosine 129, arginine 133, and serine 137. FMN is bound by residues 146–147 (QS) and tryptophan 191. Residue 197-199 (RLH) participates in substrate binding. FMN is bound at residue arginine 201.

It belongs to the pyridoxamine 5'-phosphate oxidase family. In terms of assembly, homodimer. The cofactor is FMN.

It catalyses the reaction pyridoxamine 5'-phosphate + O2 + H2O = pyridoxal 5'-phosphate + H2O2 + NH4(+). The enzyme catalyses pyridoxine 5'-phosphate + O2 = pyridoxal 5'-phosphate + H2O2. Its pathway is cofactor metabolism; pyridoxal 5'-phosphate salvage; pyridoxal 5'-phosphate from pyridoxamine 5'-phosphate: step 1/1. It participates in cofactor metabolism; pyridoxal 5'-phosphate salvage; pyridoxal 5'-phosphate from pyridoxine 5'-phosphate: step 1/1. In terms of biological role, catalyzes the oxidation of either pyridoxine 5'-phosphate (PNP) or pyridoxamine 5'-phosphate (PMP) into pyridoxal 5'-phosphate (PLP). This is Pyridoxine/pyridoxamine 5'-phosphate oxidase from Klebsiella pneumoniae subsp. pneumoniae (strain ATCC 700721 / MGH 78578).